The chain runs to 175 residues: Large ribosomal subunit protein uL16 (175 aa).

Belongs to the universal ribosomal protein uL16 family.

In Metallosphaera sedula (strain ATCC 51363 / DSM 5348 / JCM 9185 / NBRC 15509 / TH2), this protein is Large ribosomal subunit protein uL16.